The primary structure comprises 151 residues: Sperm surface protein Sp17 (151 aa).

Disordered stretches follow at residues 56-115 (DPAE…EKEE) and 127-151 (GHIA…EENK). Residues 62–98 (SKVEDRFYNNHAFEEQEPPEKSDPKQEESQISGKEEE) are compositionally biased toward basic and acidic residues. The region spanning 114 to 143 (EEVAAVKIQAAFRGHIAREEAKKMKTNSLQ) is the IQ domain.

As to quaternary structure, homodimer. May interact with ROPN1. In terms of tissue distribution, testis and sperm specific.

It localises to the membrane. Functionally, sperm surface zona pellucida binding protein. Helps to bind spermatozoa to the zona pellucida with high affinity. Might function in binding zona pellucida and carbohydrates. The polypeptide is Sperm surface protein Sp17 (SPA17) (Homo sapiens (Human)).